The sequence spans 242 residues: Phosphoribosylaminoimidazole-succinocarboxamide synthase (242 aa).

It belongs to the SAICAR synthetase family.

The enzyme catalyses 5-amino-1-(5-phospho-D-ribosyl)imidazole-4-carboxylate + L-aspartate + ATP = (2S)-2-[5-amino-1-(5-phospho-beta-D-ribosyl)imidazole-4-carboxamido]succinate + ADP + phosphate + 2 H(+). Its pathway is purine metabolism; IMP biosynthesis via de novo pathway; 5-amino-1-(5-phospho-D-ribosyl)imidazole-4-carboxamide from 5-amino-1-(5-phospho-D-ribosyl)imidazole-4-carboxylate: step 1/2. This is Phosphoribosylaminoimidazole-succinocarboxamide synthase from Trichodesmium erythraeum (strain IMS101).